Here is a 256-residue protein sequence, read N- to C-terminus: Tetraspanin-32 (256 aa).

The next 4 helical transmembrane spans lie at 15-35 (LITN…VVVI), 61-81 (AFYV…LSTI), 90-110 (LMAA…QVAF), and 203-223 (CTSL…WFAI).

It belongs to the tetraspanin (TM4SF) family. As to expression, expressed exclusively in hematopoietic tissues. Expression detected in spleen, thymus, bone marrow and peripheral blood leukocytes but not in heart, brain, lung, liver, kidney or testis.

Its subcellular location is the membrane. This Mus musculus (Mouse) protein is Tetraspanin-32 (Tspan32).